Reading from the N-terminus, the 301-residue chain is Ribosome-inactivating protein (301 aa).

The propeptide at 1-16 is or 12 (in 10% of the molecules); it reads MAEITLEPSDLMAQTN. Residues 162-186 constitute a propeptide that is removed on maturation; it reads MATLEEEEVKMQMQMPEAADLAAAA. Glu-207 is a catalytic residue. The propeptide occupies 258-301; that stretch reads VIPDMQKLGIKDKNEAARIVALVKNQTTAAAATAASADNDDDEA.

This sequence belongs to the ribosome-inactivating protein family. Type 1 RIP subfamily. Synthesized and stored in the kernel as a 34 kDa inactive precursor. During germination, this neutral precursor is converted into a basic, active form by limited proteolysis, which removes 25 AA of net charge -6 from the center of the polypeptide chain. Additional processing also occurs at the N- and C-termini of the polypeptide. A two-chain active RIP (comprised of 16.5 and 8.5 kDa fragments that remain tightly associated) is produced from this processing event.

The enzyme catalyses Endohydrolysis of the N-glycosidic bond at one specific adenosine on the 28S rRNA.. In terms of biological role, potent catalytic inactivator of eukaryotic protein synthesis. It may be a component of natural defense mechanisms involved in protecting the kernel against soil-borne fungal infections. The protein is Ribosome-inactivating protein of Zea mays (Maize).